The chain runs to 463 residues: uncharacterized protein (463 aa).

Belongs to the mycobacterial PPE family.

This is an uncharacterized protein from Mycobacterium tuberculosis (strain ATCC 25618 / H37Rv).